The chain runs to 731 residues: DNA ligase (731 aa).

Residues D47–D51, S96–I97, and E133 each bind NAD(+). Catalysis depends on K135, which acts as the N6-AMP-lysine intermediate. Residues R156, E192, K313, and K337 each contribute to the NAD(+) site. Residues C462, C465, C480, and C486 each contribute to the Zn(2+) site. Positions A645–A731 constitute a BRCT domain.

The protein belongs to the NAD-dependent DNA ligase family. LigA subfamily. Mg(2+) is required as a cofactor. The cofactor is Mn(2+).

It catalyses the reaction NAD(+) + (deoxyribonucleotide)n-3'-hydroxyl + 5'-phospho-(deoxyribonucleotide)m = (deoxyribonucleotide)n+m + AMP + beta-nicotinamide D-nucleotide.. Its function is as follows. DNA ligase that catalyzes the formation of phosphodiester linkages between 5'-phosphoryl and 3'-hydroxyl groups in double-stranded DNA using NAD as a coenzyme and as the energy source for the reaction. It is essential for DNA replication and repair of damaged DNA. The chain is DNA ligase from Acidovorax sp. (strain JS42).